A 705-amino-acid polypeptide reads, in one-letter code: Calpain-1 catalytic subunit (705 aa).

Residues 48-347 (LFRDPQFPAG…FSRLEICNLT (300 aa)) form the Calpain catalytic domain. Active-site residues include C108, H265, and N289. Positions 348-517 (PDALTKDELS…KQSDTAELDE (170 aa)) are domain III. The linker stretch occupies residues 518 to 533 (EISADLADEEEITEDD). Residues 530–565 (TEDDIEDGFKNMFQQLAGEDMEISVFELKTILNRVI) form the EF-hand 1 domain. Residues 534–704 (IEDGFKNMFQ…LAEWLLLTMC (171 aa)) form a domain IV region. Ca(2+) contacts are provided by D549, E551, E556, D589, D591, S593, R595, E600, D619, D621, S623, T625, and E630. EF-hand domains are found at residues 606-641 (NKIR…AGFK) and 671-705 (VKLE…TMCG).

Belongs to the peptidase C2 family. Heterodimer of large (catalytic) and a small (regulatory) subunit. Requires Ca(2+) as cofactor. In terms of processing, the N-terminus is blocked. In terms of tissue distribution, ubiquitously expressed.

It is found in the cytoplasm. It localises to the cell membrane. It catalyses the reaction Broad endopeptidase specificity.. Its activity is regulated as follows. Activated by micromolar concentrations of calcium and inhibited by calpastatin. Its function is as follows. Calcium-regulated non-lysosomal thiol-protease which catalyze limited proteolysis of substrates involved in cytoskeletal remodeling and signal transduction. In Gallus gallus (Chicken), this protein is Calpain-1 catalytic subunit.